The following is a 301-amino-acid chain: Probable alpha-L-glutamate ligase (301 aa).

The ATP-grasp domain maps to 104–287 (LQLLSRKGVG…VAGRIVSFIE (184 aa)). ATP is bound by residues Lys141, 178-179 (EF), Asp187, and 211-213 (RSN). The Mg(2+) site is built by Asp248, Glu260, and Asn262. Positions 248, 260, and 262 each coordinate Mn(2+).

The protein belongs to the RimK family. Requires Mg(2+) as cofactor. Mn(2+) serves as cofactor.

This chain is Probable alpha-L-glutamate ligase, found in Thioalkalivibrio sulfidiphilus (strain HL-EbGR7).